The sequence spans 683 residues: Methionine--tRNA ligase (683 aa).

Positions 15 to 25 (PYANGPIHLGH) match the 'HIGH' region motif. Residues C146, C149, C159, and C162 each coordinate Zn(2+). The 'KMSKS' region signature appears at 332-336 (KMSKS). Residue K335 coordinates ATP. The tRNA-binding domain maps to 581 to 683 (DFCKVDLRVA…AGAKAGQRVK (103 aa)).

Belongs to the class-I aminoacyl-tRNA synthetase family. MetG type 1 subfamily. Homodimer. The cofactor is Zn(2+).

It localises to the cytoplasm. The enzyme catalyses tRNA(Met) + L-methionine + ATP = L-methionyl-tRNA(Met) + AMP + diphosphate. In terms of biological role, is required not only for elongation of protein synthesis but also for the initiation of all mRNA translation through initiator tRNA(fMet) aminoacylation. This is Methionine--tRNA ligase from Histophilus somni (strain 2336) (Haemophilus somnus).